The primary structure comprises 521 residues: Biotinidase (521 aa).

Positions Met1 to Ser25 are cleaved as a signal peptide. The region spanning Asn50 to Thr329 is the CN hydrolase domain. The Proton acceptor role is filled by Glu90. N-linked (GlcNAc...) asparagine glycosylation is found at Asn128 and Asn181. Residue Lys190 is the Proton donor of the active site. Cys223 (nucleophile) is an active-site residue. An N-linked (GlcNAc...) asparagine glycan is attached at Asn380.

The protein belongs to the carbon-nitrogen hydrolase superfamily. BTD/VNN family.

It is found in the secreted. The protein localises to the extracellular space. It catalyses the reaction biocytin + H2O = biotin + L-lysine. The enzyme catalyses biotin amide + H2O = biotin + NH4(+). In terms of biological role, catalytic release of biotin from biocytin, the product of biotin-dependent carboxylases degradation. This chain is Biotinidase, found in Rattus norvegicus (Rat).